We begin with the raw amino-acid sequence, 282 residues long: Putative phosphoenolpyruvate synthase regulatory protein (282 aa).

ADP is bound at residue 162-169 (GVSRSGKT).

The protein belongs to the pyruvate, phosphate/water dikinase regulatory protein family. PSRP subfamily.

It catalyses the reaction [pyruvate, water dikinase] + ADP = [pyruvate, water dikinase]-phosphate + AMP + H(+). The catalysed reaction is [pyruvate, water dikinase]-phosphate + phosphate + H(+) = [pyruvate, water dikinase] + diphosphate. Bifunctional serine/threonine kinase and phosphorylase involved in the regulation of the phosphoenolpyruvate synthase (PEPS) by catalyzing its phosphorylation/dephosphorylation. The sequence is that of Putative phosphoenolpyruvate synthase regulatory protein from Psychrobacter arcticus (strain DSM 17307 / VKM B-2377 / 273-4).